The chain runs to 235 residues: Small capsomere-interacting protein (235 aa).

Residues 104 to 235 form a disordered region; it reads PRIIRPQPPN…SGNASRSRRV (132 aa). Polar residues predominate over residues 127–139; the sequence is PQKTQSADQSALQ. Low complexity predominate over residues 158–188; sequence TTSASVGQQQHVVSGSSGQQPQQGAQSSTVQ. Residues 220 to 235 are compositionally biased toward polar residues; that stretch reads LSHTGQSGNASRSRRV.

It belongs to the herpesviridae small capsomere-interacting protein family. Interacts with the major capsid protein/MCP.

The protein localises to the virion. It is found in the host nucleus. Its function is as follows. Participates in the assembly of the infectious particles by decorating the outer surface of the capsid shell and thus forming a layer between the capsid and the tegument. Complexes composed of the capsid protein VP5 and VP26 assemble together in the host cytoplasm and are translocated to the nucleus, where they accumulate and participate in capsid assembly. Participates in the assembly of the infectious particles by decorating the outer surface of the capsid shell and thus forming a layer between the capsid and the tegument. Complexes composed of the major capsid protein and small capsomere-interacting protein/SCP assemble together in the host cytoplasm and are translocated to the nucleus, where they accumulate and participate in capsid assembly. The sequence is that of Small capsomere-interacting protein from Homo sapiens (Human).